The sequence spans 244 residues: tRNA pseudouridine synthase A (244 aa).

The Nucleophile role is filled by D55. Y113 serves as a coordination point for substrate.

This sequence belongs to the tRNA pseudouridine synthase TruA family. As to quaternary structure, homodimer.

It catalyses the reaction uridine(38/39/40) in tRNA = pseudouridine(38/39/40) in tRNA. Its function is as follows. Formation of pseudouridine at positions 38, 39 and 40 in the anticodon stem and loop of transfer RNAs. The polypeptide is tRNA pseudouridine synthase A (Phytoplasma mali (strain AT)).